We begin with the raw amino-acid sequence, 540 residues long: Phosphatidylinositol 4-phosphate 5-kinase type-1 beta (540 aa).

Positions 1 to 23 (MSSVTENGDVTAGKPNEEKTYKK) are disordered. The PIPK domain occupies 25–395 (TSSAIKGAIQ…RFLKFMNTRV (371 aa)).

It localises to the cytoplasm. Its subcellular location is the cytosol. The protein resides in the cell membrane. The protein localises to the endomembrane system. The catalysed reaction is a 1,2-diacyl-sn-glycero-3-phospho-(1D-myo-inositol 4-phosphate) + ATP = a 1,2-diacyl-sn-glycero-3-phospho-(1D-myo-inositol-4,5-bisphosphate) + ADP + H(+). The enzyme catalyses 1-octadecanoyl-2-(5Z,8Z,11Z,14Z)-eicosatetraenoyl-sn-glycero-3-phospho-1D-myo-inositol 4-phosphate + ATP = 1-octadecanoyl-2-(5Z,8Z,11Z,14Z)-eicosatetraenoyl-sn-glycero-3-phospho-1D-myo-inositol 4,5-bisphosphate + ADP + H(+). It catalyses the reaction 1-octadecanoyl-2-(9Z)-octadecenoyl-sn-glycero-3-phospho-1D-myo-inositol 4-phosphate + ATP = 1-octadecanoyl-2-(9Z)-octadecenoyl-sn-glycero-3-phospho-1D-myo-inositol 4,5-bisphosphate + ADP + H(+). It carries out the reaction 1-octadecanoyl-2-(9Z)-octadecenoyl-sn-glycero-3-phospho-1D-myo-inositol + ATP = 1-octadecanoyl-2-(9Z)-octadecenoyl-sn-glycero-3-phospho-1D-myo-inositol 5-phosphate + ADP + H(+). The catalysed reaction is 1-octadecanoyl-2-(9Z,12Z)-octadecadienoyl-sn-glycero-3-phospho-1D-myo-inositol + ATP = 1-octadecanoyl-2-(9Z,12Z)-octadecadienoyl-sn-glycero-3-phospho-1D-myo-inositol 5-phosphate + ADP + H(+). The enzyme catalyses 1-octadecanoyl-2-(5Z,8Z,11Z,14Z-eicosatetraenoyl)-sn-glycero-3-phospho-(1D-myo-inositol) + ATP = 1-octadecanoyl-2-(5Z,8Z,11Z,14Z)-eicosatetraenoyl-sn-glycero-3-phospho-1D-myo-inositol 5-phosphate + ADP + H(+). It catalyses the reaction 1,2-di-(9Z,12Z)-octadecadienoyl-sn-glycero-3-phospho-1D-myo-inositol + ATP = 1,2-di(9Z,12Z)-octadecadienoyl-sn-glycero-3-phospho-1D-myo-inositol 5-phosphate + ADP + H(+). Catalyzes the phosphorylation of phosphatidylinositol 4-phosphate (PtdIns(4)P/PI4P) to form phosphatidylinositol 4,5-bisphosphate (PtdIns(4,5)P2/PIP2), a lipid second messenger that regulates several cellular processes such as signal transduction, vesicle trafficking, actin cytoskeleton dynamics, cell adhesion, and cell motility. PtdIns(4,5)P2 can directly act as a second messenger or can be utilized as a precursor to generate other second messengers: inositol 1,4,5-trisphosphate (IP3), diacylglycerol (DAG) or phosphatidylinositol-3,4,5-trisphosphate (PtdIns(3,4,5)P3/PIP3). This chain is Phosphatidylinositol 4-phosphate 5-kinase type-1 beta (PIP5K1B), found in Gallus gallus (Chicken).